Consider the following 491-residue polypeptide: Sucrose transport protein SUC9 (491 aa).

The segment covering 1-12 has biased composition (basic and acidic residues); sequence MSDIQAKEDAAP. The tract at residues 1–26 is disordered; it reads MSDIQAKEDAAPVDRQSSSSVVVPDE. Topologically, residues 1–33 are cytoplasmic; sequence MSDIQAKEDAAPVDRQSSSSVVVPDEPSPLRKM. S17 is modified (phosphoserine). Residues 34 to 54 form a helical membrane-spanning segment; sequence ISVASIAAGIQFGWALQLSLL. At 55–68 the chain is on the extracellular side; sequence TPYVQLLGVPHKWS. Residues 69-89 form a helical membrane-spanning segment; the sequence is SFIWLCGPISGLLVQPTVGYF. Residues 90–101 lie on the Cytoplasmic side of the membrane; sequence SDRCKSRFGRRR. The chain crosses the membrane as a helical span at residues 102-122; it reads PFIATGALLVALAVILIGFAA. Residues 123–139 lie on the Extracellular side of the membrane; the sequence is DFGHTMGDKLDEAVKIR. The chain crosses the membrane as a helical span at residues 140-160; that stretch reads AVGFFVVGFWILDVANNTLQG. The Cytoplasmic portion of the chain corresponds to 161 to 181; that stretch reads PCRAFLGDLAAGDAKKTRTAN. The chain crosses the membrane as a helical span at residues 182–202; the sequence is AIFSFFMAVGNVLGYAAGSYT. Residues 203–224 are Extracellular-facing; the sequence is NLHKIFPFTVTKACDIYCANLK. A helical membrane pass occupies residues 225–245; sequence SCFIISITLLIVLTIIALWYV. At 246–277 the chain is on the cytoplasmic side; that stretch reads EDKQWSPNADSDNEKTPFFGEIFGAFKVMKRP. The chain crosses the membrane as a helical span at residues 278-298; that stretch reads MWMLLAVTALNWIAWFPFLLY. The Extracellular segment spans residues 299–329; the sequence is DTDWMGREVYGGDSAGDDKMKKLYNHGIQVG. Residues 330 to 350 form a helical membrane-spanning segment; that stretch reads SLGLMLNSIVLGVMSLVIGVI. Residues 351–358 lie on the Cytoplasmic side of the membrane; sequence SKKIGAKR. A helical membrane pass occupies residues 359 to 379; the sequence is LWGAVNIILAVCLAMTVLVTK. Over 380 to 406 the chain is Extracellular; that stretch reads KAEEHRKIAGRMALPTNAIRDGALSLF. The helical transmembrane segment at 407–427 threads the bilayer; that stretch reads AILGIPLAITFSIPFALASII. The Cytoplasmic portion of the chain corresponds to 428–443; that stretch reads SSSSGAGQGLSLGVLN. Residues 444–464 traverse the membrane as a helical segment; that stretch reads MAIVIPQMIVSFGVGPIDALF. Over 465–468 the chain is Extracellular; the sequence is GGGN. Residues 469 to 489 form a helical membrane-spanning segment; the sequence is LPGFVVGAIAALISSVVALTV. At 490 to 491 the chain is on the cytoplasmic side; sequence LP.

This sequence belongs to the glycoside-pentoside-hexuronide (GPH) cation symporter transporter (TC 2.A.2.4) family. Widely expressed.

It is found in the cell membrane. It catalyses the reaction sucrose(out) + H(+)(out) = sucrose(in) + H(+)(in). It functions in the pathway glycan biosynthesis; sucrose metabolism. With respect to regulation, inhibited by protonophores (e.g. carbonyl cyanide m-chlorophenyl-hydrazone (CCCP)) and SH group inhibitors (e.g. p-chloromercuribenzene sulphonic acid (PCMBS)). Its function is as follows. High-affinity sucrose transporter. Responsible for the transport of sucrose into the cell, with the concomitant uptake of protons (symport system). Can also transport a wide range of glucosides, such as helicin, salicin, arbutin, maltose, fraxin, esculin, uranose, alpha-methylglucoside, alpha-phenylglucoside and beta-phenylglucoside. Plays a role in flowering time transition delay. In Arabidopsis thaliana (Mouse-ear cress), this protein is Sucrose transport protein SUC9.